Here is a 252-residue protein sequence, read N- to C-terminus: Major prion protein (252 aa).

Residues 1 to 22 (MANLGYWMLVLFVATWSDLGLC) form the signal peptide. The interaction with GRB2, ERI3 and SYN1 stretch occupies residues 23–229 (KKRPKPGGWN…ESQAYYQRGS (207 aa)). A disordered region spans residues 26–104 (PKPGGWNTGG…HNQWNKPSKP (79 aa)). Repeat copies occupy residues 51–58 (PQGGGWGQ), 59–66 (PHGGGWGQ), 67–74 (PHGGGWGQ), 75–82 (PHGGGWGQ), and 83–90 (PHGGGWGQ). A 5 X 8 AA tandem repeats of P-H-G-G-G-W-G-Q region spans residues 51–90 (PQGGGWGQPHGGGWGQPHGGGWGQPHGGGWGQPHGGGWGQ). Residues 52 to 92 (QGGGWGQPHGGGWGQPHGGGWGQPHGGGWGQPHGGGWGQAG) are compositionally biased toward gly residues. 12 residues coordinate Cu(2+): histidine 60, glycine 61, glycine 62, histidine 68, glycine 69, glycine 70, histidine 76, glycine 77, glycine 78, histidine 84, glycine 85, and glycine 86. A disulfide bridge links cysteine 178 with cysteine 213. N-linked (GlcNAc...) asparagine glycosylation is found at asparagine 180 and asparagine 196. Serine 229 carries GPI-anchor amidated serine lipidation. A propeptide spans 230 to 252 (SMVLFSSPPVILLISFLIFLIVG) (removed in mature form).

This sequence belongs to the prion family. Monomer and homodimer. Has a tendency to aggregate into amyloid fibrils containing a cross-beta spine, formed by a steric zipper of superposed beta-strands. Soluble oligomers may represent an intermediate stage on the path to fibril formation. Copper binding may promote oligomerization. Interacts with GRB2, APP, ERI3/PRNPIP and SYN1. Mislocalized cytosolically exposed PrP interacts with MGRN1; this interaction alters MGRN1 subcellular location and causes lysosomal enlargement. Interacts with KIAA1191.

It localises to the cell membrane. Its subcellular location is the golgi apparatus. Its function is as follows. Its primary physiological function is unclear. Has cytoprotective activity against internal or environmental stresses. May play a role in neuronal development and synaptic plasticity. May be required for neuronal myelin sheath maintenance. May play a role in iron uptake and iron homeostasis. Soluble oligomers are toxic to cultured neuroblastoma cells and induce apoptosis (in vitro). Association with GPC1 (via its heparan sulfate chains) targets PRNP to lipid rafts. Also provides Cu(2+) or Zn(2+) for the ascorbate-mediated GPC1 deaminase degradation of its heparan sulfate side chains. The polypeptide is Major prion protein (PRNP) (Ateles paniscus (Black spider monkey)).